A 406-amino-acid chain; its full sequence is 2,3-bisphosphoglycerate-independent phosphoglycerate mutase (406 aa).

It belongs to the BPG-independent phosphoglycerate mutase family. A-PGAM subfamily.

It catalyses the reaction (2R)-2-phosphoglycerate = (2R)-3-phosphoglycerate. Its pathway is carbohydrate degradation; glycolysis; pyruvate from D-glyceraldehyde 3-phosphate: step 3/5. In terms of biological role, catalyzes the interconversion of 2-phosphoglycerate and 3-phosphoglycerate. This Methanococcus vannielii (strain ATCC 35089 / DSM 1224 / JCM 13029 / OCM 148 / SB) protein is 2,3-bisphosphoglycerate-independent phosphoglycerate mutase.